The following is a 322-amino-acid chain: Ribosomal RNA small subunit methyltransferase H (322 aa).

S-adenosyl-L-methionine is bound by residues 35 to 37 (GGY), D52, F79, D100, and Q107. A disordered region spans residues 254-322 (GATPAGSRHL…TAPKKEGRQG (69 aa)). Residues 295-309 (SRSATLRVARRTAAA) are compositionally biased toward low complexity.

Belongs to the methyltransferase superfamily. RsmH family.

Its subcellular location is the cytoplasm. It catalyses the reaction cytidine(1402) in 16S rRNA + S-adenosyl-L-methionine = N(4)-methylcytidine(1402) in 16S rRNA + S-adenosyl-L-homocysteine + H(+). Its function is as follows. Specifically methylates the N4 position of cytidine in position 1402 (C1402) of 16S rRNA. The sequence is that of Ribosomal RNA small subunit methyltransferase H from Rhizorhabdus wittichii (strain DSM 6014 / CCUG 31198 / JCM 15750 / NBRC 105917 / EY 4224 / RW1) (Sphingomonas wittichii).